We begin with the raw amino-acid sequence, 97 residues long: Protein RALF-like 2 (97 aa).

An N-terminal signal peptide occupies residues 1–25 (MEARHMLVTILLLSFVFMNIMKVEA). Intrachain disulfides connect C42-C49 and C61-C67.

It belongs to the plant rapid alkalinization factor (RALF) family.

The protein resides in the secreted. Functionally, cell signaling peptide that may regulate plant stress, growth, and development. Mediates a rapid alkalinization of extracellular space by mediating a transient increase in the cytoplasmic Ca(2+) concentration leading to a calcium-dependent signaling events through a cell surface receptor and a concomitant activation of some intracellular mitogen-activated protein kinases. The sequence is that of Protein RALF-like 2 (RALFL2) from Arabidopsis thaliana (Mouse-ear cress).